Here is a 552-residue protein sequence, read N- to C-terminus: Asparagine--tRNA ligase, cytoplasmic (552 aa).

The disordered stretch occupies residues 1-23; that stretch reads MSQVYVNEKTGADSTDVSGSEQQ. The span at 12-23 shows a compositional bias: polar residues; that stretch reads ADSTDVSGSEQQ.

This sequence belongs to the class-II aminoacyl-tRNA synthetase family.

It is found in the cytoplasm. The enzyme catalyses tRNA(Asn) + L-asparagine + ATP = L-asparaginyl-tRNA(Asn) + AMP + diphosphate + H(+). The chain is Asparagine--tRNA ligase, cytoplasmic (DED81) from Debaryomyces hansenii (strain ATCC 36239 / CBS 767 / BCRC 21394 / JCM 1990 / NBRC 0083 / IGC 2968) (Yeast).